The primary structure comprises 225 residues: Shikimate kinase (225 aa).

27–32 serves as a coordination point for ATP; sequence GAGKTT. Position 31 (threonine 31) interacts with Mg(2+). Residues aspartate 49, arginine 73, and glycine 95 each coordinate substrate. Arginine 132 contributes to the ATP binding site. Arginine 150 lines the substrate pocket. A disordered region spans residues 186–225; that stretch reads GGSEPDEAADAAGGSEPDEAADAAGGSEPDEAADAAGGKR.

This sequence belongs to the shikimate kinase family. As to quaternary structure, monomer. Mg(2+) serves as cofactor.

Its subcellular location is the cytoplasm. The enzyme catalyses shikimate + ATP = 3-phosphoshikimate + ADP + H(+). The protein operates within metabolic intermediate biosynthesis; chorismate biosynthesis; chorismate from D-erythrose 4-phosphate and phosphoenolpyruvate: step 5/7. Functionally, catalyzes the specific phosphorylation of the 3-hydroxyl group of shikimic acid using ATP as a cosubstrate. The polypeptide is Shikimate kinase (Frankia casuarinae (strain DSM 45818 / CECT 9043 / HFP020203 / CcI3)).